The sequence spans 294 residues: 33 kDa chaperonin (294 aa).

Intrachain disulfides connect C238–C240 and C271–C274.

Belongs to the HSP33 family. Post-translationally, under oxidizing conditions two disulfide bonds are formed involving the reactive cysteines. Under reducing conditions zinc is bound to the reactive cysteines and the protein is inactive.

The protein resides in the cytoplasm. Redox regulated molecular chaperone. Protects both thermally unfolding and oxidatively damaged proteins from irreversible aggregation. Plays an important role in the bacterial defense system toward oxidative stress. In Clostridium tetani (strain Massachusetts / E88), this protein is 33 kDa chaperonin.